The following is a 384-amino-acid chain: 8-amino-7-oxononanoate synthase (384 aa).

Arginine 23 is a binding site for substrate. Position 110–111 (110–111) interacts with pyridoxal 5'-phosphate; that stretch reads GF. Histidine 135 is a binding site for substrate. Pyridoxal 5'-phosphate-binding residues include serine 179, histidine 206, and threonine 232. An N6-(pyridoxal phosphate)lysine modification is found at lysine 235. Threonine 348 contributes to the substrate binding site.

This sequence belongs to the class-II pyridoxal-phosphate-dependent aminotransferase family. BioF subfamily. As to quaternary structure, homodimer. Pyridoxal 5'-phosphate serves as cofactor.

The enzyme catalyses 6-carboxyhexanoyl-[ACP] + L-alanine + H(+) = (8S)-8-amino-7-oxononanoate + holo-[ACP] + CO2. Its pathway is cofactor biosynthesis; biotin biosynthesis. Functionally, catalyzes the decarboxylative condensation of pimeloyl-[acyl-carrier protein] and L-alanine to produce 8-amino-7-oxononanoate (AON), [acyl-carrier protein], and carbon dioxide. The chain is 8-amino-7-oxononanoate synthase from Vibrio cholerae serotype O1 (strain ATCC 39315 / El Tor Inaba N16961).